The primary structure comprises 1398 residues: MNQEIMNLFNPTTPAQVFDQIRISIASPEKILSWSYGEIKKPETINYRTFKPERDGLFCARIFGPIKDYECLCGKYKRMKYKGIICEKCSVEVTLSRVRRERMGHIELAAPVAHIWFLKSLPSRIGLLLDMTLKDLERILYFEYYVVLEPGLTALKDRQLLSEDEYLKAQDEYGQDSFTAMIGAEAIRELLKGMDLEKLEASLRVEMQETDSDIKHKKLAKRLKIVEAFRHSGNKPEWMIMTVVPVIPPDLRPLVPLDGGRFATSDLNDLYRRVINRNNRLKRLMELRAPDIIIRNEKRMLQEAVDALFDNGRRGRVITGANKRPLKSLADMLKGKQGRFRQNLLGKRVDYSGRSVIVVGPELRLHQCGLPKKMALELFKPFIYSRLDAKGLSTTVKQAKKLVEKERPEVWDILDEVIREHPVLLNRAPTLHRLGIQAFEPVLIEGKAIQLHPLVCAAFNADFDGDQMAVHVPLSLEAQLEARVLMMSTNNILHPANGQPIIVPSQDIVLGLYYVSIMREGLPGEGKIFGDMAELEHALHAKVIHLHTKIKYRWQGMDETGKVSTRWIETTAGRVMLGNLLPKNPRISYEIINKLMTKREISGVIDQVYRHCGQKETVIFCDRIMALGFYNAFKAGISFGKDDMVVPHGKWKIVDTTRTLAKDFEQQYNDGLITHGEKYNKVVDAWSKATEEIAKAMMKEISATKKTASGADADINSIYMMAHSGARGSPAQMRQLAGMRGLMAKPSGEIIETPIISNFKEGLSVLEYFNSTHGARKGLADTALKTANSGYLTRRLVDVAQDCIITQDDCGTKLGIKMRAIVDAGTVVASLGSRILGRTACEDVRDSSGKVIIKRGTLMEESHLDAIHQGGVQEVKIRSALTCELVNGICGKCYGRDLARGTPVNHGEAVGVIAAQSIGEPGTQLTMRTFHIGGAAQLNEQSFVESNFDGKIVIRNKAIARNSEGHLIAMVRNMVVAIVDADGTERATHRIQYGSRLHVDEGDTVKRGQRIVEWDPYTRPLLTEVEGTIGFEDLVEGQSISETLDEATGIAKRVVIDWRSTRGGSDLRPAIVVKGKDGKVLKLARGGDARYMLSVDAILSVDIGAKVAPGDILARVSTESAKTRDITGGLPRVAELFEARRPKDAAIIAEIAGTIRFGRDYKNKRRISIEPMDKTDEPREYLIPKGKHIHLQDGDVVEKGDFIVEGNPAPHDILAVKGIEELAAYLVNEIQEVYRLQGVLINDKHIEVIVRQMLQKVEVTDQGDTDMISGEQVDKIEFDALNEKAKEEGKKIATGTPVLLGITKASLQTRSFFSAASFQETTRVLTEAAVNGKVDPLEGLKENVIVGRLIPAGTGASMAKIREVAMKRDKLILDEREKQAAVVSPAPEAELPALPPAE.

Residues cysteine 71, cysteine 73, cysteine 86, and cysteine 89 each contribute to the Zn(2+) site. Residues aspartate 462, aspartate 464, and aspartate 466 each coordinate Mg(2+). Residues cysteine 810, cysteine 883, cysteine 890, and cysteine 893 each contribute to the Zn(2+) site. The interval 1377–1398 (EKQAAVVSPAPEAELPALPPAE) is disordered. A compositionally biased stretch (low complexity) spans 1380–1392 (AAVVSPAPEAELP).

The protein belongs to the RNA polymerase beta' chain family. In terms of assembly, the RNAP catalytic core consists of 2 alpha, 1 beta, 1 beta' and 1 omega subunit. When a sigma factor is associated with the core the holoenzyme is formed, which can initiate transcription. Requires Mg(2+) as cofactor. Zn(2+) is required as a cofactor.

It carries out the reaction RNA(n) + a ribonucleoside 5'-triphosphate = RNA(n+1) + diphosphate. Functionally, DNA-dependent RNA polymerase catalyzes the transcription of DNA into RNA using the four ribonucleoside triphosphates as substrates. The protein is DNA-directed RNA polymerase subunit beta' of Bradyrhizobium diazoefficiens (strain JCM 10833 / BCRC 13528 / IAM 13628 / NBRC 14792 / USDA 110).